Here is a 48-residue protein sequence, read N- to C-terminus: Large ribosomal subunit protein eL40 (48 aa).

The protein belongs to the eukaryotic ribosomal protein eL40 family.

The sequence is that of Large ribosomal subunit protein eL40 from Methanobrevibacter smithii (strain ATCC 35061 / DSM 861 / OCM 144 / PS).